The primary structure comprises 187 residues: NADH-quinone oxidoreductase subunit B (187 aa).

[4Fe-4S] cluster is bound by residues C51, C52, C117, and C149.

This sequence belongs to the complex I 20 kDa subunit family. In terms of assembly, NDH-1 is composed of 14 different subunits. Subunits NuoB, C, D, E, F, and G constitute the peripheral sector of the complex. [4Fe-4S] cluster serves as cofactor.

Its subcellular location is the cell inner membrane. It carries out the reaction a quinone + NADH + 5 H(+)(in) = a quinol + NAD(+) + 4 H(+)(out). Functionally, NDH-1 shuttles electrons from NADH, via FMN and iron-sulfur (Fe-S) centers, to quinones in the respiratory chain. The immediate electron acceptor for the enzyme in this species is believed to be ubiquinone. Couples the redox reaction to proton translocation (for every two electrons transferred, four hydrogen ions are translocated across the cytoplasmic membrane), and thus conserves the redox energy in a proton gradient. This Nitratidesulfovibrio vulgaris (strain DSM 19637 / Miyazaki F) (Desulfovibrio vulgaris) protein is NADH-quinone oxidoreductase subunit B.